We begin with the raw amino-acid sequence, 168 residues long: PTS system glucose-specific EIIA component (168 aa).

A PTS EIIA type-1 domain is found at D38–N142. Positions 75 and 90 each coordinate Zn(2+). H90 (tele-phosphohistidine intermediate; for EIIA activity) is an active-site residue. H90 bears the Phosphohistidine; by HPr mark.

The cofactor is Zn(2+).

The protein resides in the cytoplasm. In terms of biological role, the phosphoenolpyruvate-dependent sugar phosphotransferase system (sugar PTS), a major carbohydrate active transport system, catalyzes the phosphorylation of incoming sugar substrates concomitantly with their translocation across the cell membrane. The enzyme II complex composed of PtsG and Crr is involved in glucose transport. The sequence is that of PTS system glucose-specific EIIA component (crr) from Buchnera aphidicola subsp. Baizongia pistaciae (strain Bp).